Reading from the N-terminus, the 123-residue chain is Large ribosomal subunit protein bL20 (123 aa).

Belongs to the bacterial ribosomal protein bL20 family.

Functionally, binds directly to 23S ribosomal RNA and is necessary for the in vitro assembly process of the 50S ribosomal subunit. It is not involved in the protein synthesizing functions of that subunit. The protein is Large ribosomal subunit protein bL20 of Ehrlichia ruminantium (strain Gardel).